The following is a 205-amino-acid chain: Isochorismatase domain-containing protein 2 (205 aa).

Residues S7 and S202 each carry the phosphoserine modification.

It belongs to the isochorismatase family. As to quaternary structure, interacts with CDKN2A.

It is found in the cytoplasm. The protein resides in the nucleus. This chain is Isochorismatase domain-containing protein 2 (ISOC2), found in Pongo abelii (Sumatran orangutan).